The primary structure comprises 126 residues: Protein C10 (126 aa).

A2 carries the post-translational modification N-acetylalanine.

This sequence belongs to the UPF0456 family. Ubiquitously expressed, with higher expression in lung and fetal brain.

The protein resides in the cytoplasm. In terms of biological role, in brain, may be required for corpus callosum development. This chain is Protein C10 (C12orf57), found in Homo sapiens (Human).